A 298-amino-acid chain; its full sequence is UDP-N-acetylenolpyruvoylglucosamine reductase (298 aa).

The FAD-binding PCMH-type domain occupies 26–191 (KTGGPADWLA…LDATFALEPG (166 aa)). R170 is an active-site residue. The active-site Proton donor is S220. Residue E290 is part of the active site.

Belongs to the MurB family. The cofactor is FAD.

It localises to the cytoplasm. It carries out the reaction UDP-N-acetyl-alpha-D-muramate + NADP(+) = UDP-N-acetyl-3-O-(1-carboxyvinyl)-alpha-D-glucosamine + NADPH + H(+). It participates in cell wall biogenesis; peptidoglycan biosynthesis. Its function is as follows. Cell wall formation. This chain is UDP-N-acetylenolpyruvoylglucosamine reductase, found in Limosilactobacillus reuteri subsp. reuteri (strain JCM 1112) (Lactobacillus reuteri).